We begin with the raw amino-acid sequence, 78 residues long: uncharacterized protein (78 aa).

This is an uncharacterized protein from Enterobacteria phage RB51 (Bacteriophage RB51).